The following is a 66-amino-acid chain: Large ribosomal subunit protein bL33 (66 aa).

Belongs to the bacterial ribosomal protein bL33 family.

This chain is Large ribosomal subunit protein bL33, found in Wolbachia sp. subsp. Brugia malayi (strain TRS).